The following is a 1896-amino-acid chain: von Willebrand factor A domain-containing protein 8 (1896 aa).

A mitochondrion-targeting transit peptide spans 1–18 (MHSRILFKGTAAAVAARR). An ATP-binding site is contributed by 439-446 (GAKGCGKS). Residues 1536–1564 (GLDVSSPKHGKIDAKNAPHVGGNQWAGGT) are disordered. A VWFA domain is found at 1705–1887 (RLRVLADVSG…KEIPQILQQI (183 aa)).

In terms of assembly, monomer.

It is found in the mitochondrion. Exhibits ATPase activity in vitro. The sequence is that of von Willebrand factor A domain-containing protein 8 (vwa8) from Danio rerio (Zebrafish).